Reading from the N-terminus, the 131-residue chain is Small ribosomal subunit protein uS8 (131 aa).

This sequence belongs to the universal ribosomal protein uS8 family. As to quaternary structure, part of the 30S ribosomal subunit. Contacts proteins S5 and S12.

Its function is as follows. One of the primary rRNA binding proteins, it binds directly to 16S rRNA central domain where it helps coordinate assembly of the platform of the 30S subunit. In Nitrosomonas europaea (strain ATCC 19718 / CIP 103999 / KCTC 2705 / NBRC 14298), this protein is Small ribosomal subunit protein uS8.